The chain runs to 351 residues: Cell shape-determining protein MreB (351 aa).

ATP contacts are provided by residues 20–22 (TAN), 169–171 (GGT), 217–220 (ERIK), and 299–302 (GGAL).

Belongs to the FtsA/MreB family. As to quaternary structure, forms polymers.

It localises to the cytoplasm. Functionally, forms membrane-associated dynamic filaments that are essential for cell shape determination. Acts by regulating cell wall synthesis and cell elongation, and thus cell shape. A feedback loop between cell geometry and MreB localization may maintain elongated cell shape by targeting cell wall growth to regions of negative cell wall curvature. In Haemophilus influenzae (strain ATCC 51907 / DSM 11121 / KW20 / Rd), this protein is Cell shape-determining protein MreB.